Consider the following 200-residue polypeptide: MEPVLVYNRRDIFTKSNLNKLRKEGYIPAVAYGDDIKSLPGYVSKKEFEKLYHQKGLAGKIKISIDGKERTALIKEVQTHYTKGNIIHVDFQILSENKPIYVEVPIIFENAEILKSRGLVLQRQMDTVEIEGLPKDIPEHLVIDLMAYEKPTAIKLKDIKLPEGIKITEDLDEVVAVIDVSEITEEPEVEEKKEETSSNA.

Belongs to the bacterial ribosomal protein bL25 family. CTC subfamily. As to quaternary structure, part of the 50S ribosomal subunit; part of the 5S rRNA/L5/L18/L25 subcomplex. Contacts the 5S rRNA. Binds to the 5S rRNA independently of L5 and L18.

In terms of biological role, this is one of the proteins that binds to the 5S RNA in the ribosome where it forms part of the central protuberance. The chain is Large ribosomal subunit protein bL25 from Caldicellulosiruptor bescii (strain ATCC BAA-1888 / DSM 6725 / KCTC 15123 / Z-1320) (Anaerocellum thermophilum).